The sequence spans 991 residues: Regulator of telomere elongation helicase 1 homolog (991 aa).

Positions 7–319 (NGIPVNFPFE…DDLVLLKEIL (313 aa)) constitute a Helicase ATP-binding domain. 42–49 (SPTGTGKT) is a binding site for ATP. Positions 148, 166, 175, and 211 each coordinate [4Fe-4S] cluster. Positions 254–257 (DEAH) match the DEAH box motif. The segment at 812–833 (SMKVNPHSRSTKSAGDDAEAGG) is disordered.

It belongs to the helicase family. RAD3/XPD subfamily.

Its subcellular location is the nucleus. It carries out the reaction ATP + H2O = ADP + phosphate + H(+). In terms of biological role, a probable ATP-dependent DNA helicase implicated in DNA repair and the maintenance of genomic stability. Acts as an anti-recombinase to counteract toxic recombination and limit crossover during meiosis. Regulates meiotic recombination and crossover homeostasis by physically dissociating strand invasion events and thereby promotes noncrossover repair by meiotic synthesis dependent strand annealing (SDSA) as well as disassembly of D loop recombination intermediates. The polypeptide is Regulator of telomere elongation helicase 1 homolog (Anopheles gambiae (African malaria mosquito)).